We begin with the raw amino-acid sequence, 72 residues long: Translation initiation factor IF-1 (72 aa).

In terms of domain architecture, S1-like spans 1 to 72; it reads MAKEDSIRMQ…NKGRIVYRER (72 aa).

Belongs to the IF-1 family. As to quaternary structure, component of the 30S ribosomal translation pre-initiation complex which assembles on the 30S ribosome in the order IF-2 and IF-3, IF-1 and N-formylmethionyl-tRNA(fMet); mRNA recruitment can occur at any time during PIC assembly.

It localises to the cytoplasm. Functionally, one of the essential components for the initiation of protein synthesis. Stabilizes the binding of IF-2 and IF-3 on the 30S subunit to which N-formylmethionyl-tRNA(fMet) subsequently binds. Helps modulate mRNA selection, yielding the 30S pre-initiation complex (PIC). Upon addition of the 50S ribosomal subunit IF-1, IF-2 and IF-3 are released leaving the mature 70S translation initiation complex. This is Translation initiation factor IF-1 from Halorhodospira halophila (strain DSM 244 / SL1) (Ectothiorhodospira halophila (strain DSM 244 / SL1)).